A 288-amino-acid chain; its full sequence is Undecaprenyl-diphosphatase (288 aa).

8 consecutive transmembrane segments (helical) span residues 25–45 (GITE…NEFL), 53–73 (FIDM…MVIY), 93–113 (WKLW…GLLL), 121–141 (LSNF…FIWI), 171–191 (VLSI…GIIV), 196–216 (SVAA…YSGL), 231–251 (GQAA…LFVI), and 263–283 (FTVF…YGAV).

The protein belongs to the UppP family.

The protein localises to the cell membrane. The enzyme catalyses di-trans,octa-cis-undecaprenyl diphosphate + H2O = di-trans,octa-cis-undecaprenyl phosphate + phosphate + H(+). Its function is as follows. Catalyzes the dephosphorylation of undecaprenyl diphosphate (UPP). Confers resistance to bacitracin. This chain is Undecaprenyl-diphosphatase, found in Streptococcus thermophilus (strain ATCC BAA-250 / LMG 18311).